The following is a 296-amino-acid chain: Phosphoribosylaminoimidazole-succinocarboxamide synthase (296 aa).

This sequence belongs to the SAICAR synthetase family.

It catalyses the reaction 5-amino-1-(5-phospho-D-ribosyl)imidazole-4-carboxylate + L-aspartate + ATP = (2S)-2-[5-amino-1-(5-phospho-beta-D-ribosyl)imidazole-4-carboxamido]succinate + ADP + phosphate + 2 H(+). It functions in the pathway purine metabolism; IMP biosynthesis via de novo pathway; 5-amino-1-(5-phospho-D-ribosyl)imidazole-4-carboxamide from 5-amino-1-(5-phospho-D-ribosyl)imidazole-4-carboxylate: step 1/2. The protein is Phosphoribosylaminoimidazole-succinocarboxamide synthase of Geobacter metallireducens (strain ATCC 53774 / DSM 7210 / GS-15).